A 149-amino-acid chain; its full sequence is Alpha-crystallin A chain (149 aa).

Residues 41–149 (LFRSVLESGI…DPTHSERPIP (109 aa)) form the sHSP domain. Positions 89, 91, 96, and 143 each coordinate Zn(2+).

This sequence belongs to the small heat shock protein (HSP20) family. As to quaternary structure, heteropolymer composed of three CRYAA and one CRYAB subunits. Inter-subunit bridging via zinc ions enhances stability, which is crucial as there is no protein turn over in the lens. Can also form homodimers and homotetramers (dimers of dimers) which serve as the building blocks of homooligomers. Within homooligomers, the zinc-binding motif is created from residues of 3 different molecules. His-89 and Glu-91 from one molecule are ligands of the zinc ion, and His-96 and His-143 residues from additional molecules complete the site with tetrahedral coordination geometry.

Its subcellular location is the cytoplasm. It localises to the nucleus. In terms of biological role, contributes to the transparency and refractive index of the lens. May act as a chaperone, preventing aggregation of various proteins under a wide range of stress conditions. This chain is Alpha-crystallin A chain (CRYAA), found in Anas platyrhynchos (Mallard).